A 1781-amino-acid chain; its full sequence is Chitin synthase 7 (1781 aa).

N-linked (GlcNAc...) asparagine glycans are attached at residues N133, N534, N629, N644, N655, and N660. Transmembrane regions (helical) follow at residues 741 to 761 (AWVAFVWALTFWIPSPLLKFV) and 777 to 797 (LVLFFIILLLNGLIIFWIIGF). N-linked (GlcNAc...) asparagine glycans are attached at residues N889 and N1011. Residues 1048–1068 (LLLAFAIIICIVTAVKFLAAL) form a helical membrane-spanning segment. The N-linked (GlcNAc...) asparagine glycan is linked to N1413. 3 helical membrane-spanning segments follow: residues 1444-1464 (LTGTIILPSTTVYIGYLIYVL), 1471-1491 (IPYISLAMIGAVYGHQALIFI), and 1499-1519 (IGWMIIYILAFPIYSFILPLY). The N-linked (GlcNAc...) asparagine glycan is linked to N1526. The interval 1677 to 1712 (QANLSPAAGGGHSRSGTALGFSSGSRSPMPDAMRSQ) is disordered. Residues 1690 to 1702 (RSGTALGFSSGSR) are compositionally biased toward polar residues. Residues 1723–1779 (GPTDMAIVESIRSVLCEVDLDTVTKKQVRALVEQRLQTELVGERRTFMDRQIDHELE) enclose the DEK-C domain.

It belongs to the chitin synthase family. Class V subfamily.

The protein localises to the cell membrane. It carries out the reaction [(1-&gt;4)-N-acetyl-beta-D-glucosaminyl](n) + UDP-N-acetyl-alpha-D-glucosamine = [(1-&gt;4)-N-acetyl-beta-D-glucosaminyl](n+1) + UDP + H(+). In terms of biological role, polymerizes chitin, a structural polymer of the cell wall and septum, by transferring the sugar moiety of UDP-GlcNAc to the non-reducing end of the growing chitin polymer. Shows additive effects in septum formation with CHS1, CHS2, CHS3A, CHS4, CHS5 and CHS6. Indispensable for perithecia formation and regulates conidiation. Plays an important role in the response to cell wall stress. Also required for hyphal growth and pathogenicity. This is Chitin synthase 7 from Gibberella zeae (strain ATCC MYA-4620 / CBS 123657 / FGSC 9075 / NRRL 31084 / PH-1) (Wheat head blight fungus).